Reading from the N-terminus, the 484-residue chain is Muscarinic acetylcholine receptor M4 (484 aa).

The Extracellular portion of the chain corresponds to 1–32; the sequence is MENDTWENESSASNHSIDETIVEIPGKYQTME. N-linked (GlcNAc...) asparagine glycans are attached at residues asparagine 3, asparagine 8, and asparagine 14. A helical membrane pass occupies residues 33 to 55; it reads MIFIATVTGSLSLVTVVGNILVM. At 56 to 69 the chain is on the cytoplasmic side; sequence LSIKVNRQLQTVNN. Residues 70–90 form a helical membrane-spanning segment; the sequence is YFLFSLACADLIIGVFSMNLY. Over 91-107 the chain is Extracellular; it reads SLYIIKGYWPLGPIVCD. A disulfide bridge links cysteine 106 with cysteine 186. A helical transmembrane segment spans residues 108–129; that stretch reads LWLALDYVVSNASVMNLLIISL. Over 130 to 149 the chain is Cytoplasmic; the sequence is ERXFCVTKPLTYPARRTTKM. A helical transmembrane segment spans residues 150–172; it reads AGLMIAAAWLLSFELWAPAILFW. Topologically, residues 173–194 are extracellular; that stretch reads QFIVGQRTVPSGECYIQFLSNP. The chain crosses the membrane as a helical span at residues 195–217; the sequence is AVTFGTAIAAFYLPVVIMTILYI. The Cytoplasmic segment spans residues 218–406; the sequence is HISLASRSRV…AAREKKVTRT (189 aa). The tract at residues 255-316 is disordered; that stretch reads NIPKQDAGDK…EKQPLSEASS (62 aa). Over residues 260–270 the composition is skewed to basic and acidic residues; sequence DAGDKVVEKKN. A helical membrane pass occupies residues 407-427; sequence IFAILLAFIITWTPYNVMVLI. At 428 to 441 the chain is on the extracellular side; the sequence is NTFCQTCIPETIWY. Residues 442–461 form a helical membrane-spanning segment; that stretch reads IGYWLCYVNSTINPACYALC. Over 462 to 484 the chain is Cytoplasmic; sequence NATFKKTFKHLLMCQYKSIGTAR.

Belongs to the G-protein coupled receptor 1 family. Muscarinic acetylcholine receptor subfamily. CHRM4 sub-subfamily.

The protein resides in the cell membrane. It localises to the postsynaptic cell membrane. The muscarinic acetylcholine receptor mediates various cellular responses, including inhibition of adenylate cyclase, breakdown of phosphoinositides and modulation of potassium channels through the action of G proteins. Primary transducing effect is inhibition of adenylate cyclase. In Xenopus laevis (African clawed frog), this protein is Muscarinic acetylcholine receptor M4 (chrm4).